We begin with the raw amino-acid sequence, 379 residues long: MAKKVKKTDDISKKFGEDRRKALDDALKNIEKDFGKGAVMRLGERAEQKVQVMSSGSLALDIALGAGGYPKGRIIEIYGPESSGKTTVALHAVAQAQKEGGIAAFIDAEHALDPAYAAALGVNIDELLLSQPDSGEQGLEIAGKLIDSGAVDLVVIDSVAALVPRAEIDGDIGDSHVGLQARMMSQAMRKLSASINKTKTIAIFINQLREKVGVMFGNPETTPGGRALKFYASVRLDVRGNTQIKGTGDQKDSSIGKETKIKVVKNKVAPPFKVAEVEIMYGEGISRTGELIKIASDLDVIQKAGAWFSYNGEKIGQGSENAKKFLADHPEIFDEIDHKVRVKVGLLEDEVLDNNQETVELPETDEFILDLDDAIEIED.

An ATP-binding site is contributed by 79 to 86 (GPESSGKT).

This sequence belongs to the RecA family.

It is found in the cytoplasm. In terms of biological role, can catalyze the hydrolysis of ATP in the presence of single-stranded DNA, the ATP-dependent uptake of single-stranded DNA by duplex DNA, and the ATP-dependent hybridization of homologous single-stranded DNAs. It interacts with LexA causing its activation and leading to its autocatalytic cleavage. The sequence is that of Protein RecA from Streptococcus uberis (strain ATCC BAA-854 / 0140J).